Reading from the N-terminus, the 226-residue chain is DELTA-alicitoxin-Pse1b (226 aa).

The signal sequence occupies residues 1–21 (MRHFVVFLYMFLALSIPTAFA). The propeptide occupies 22–45 (KKHIVTKKGNHQDITNDNEGENAE). The interval 50–59 (TVAGAVIAGG) is plays an important role in the hemolytic activity. Residues 58–77 (GGELALKILTKILYEIGKID) are N-terminal region. Residues Ser-101, Val-134, Ser-152, Pro-154, Tyr-180, and Tyr-184 each contribute to the phosphocholine site. Residues 152–167 (SVPFDYNLYSNWWNVK) form a trp-rich region, which is important for the binding to lipid membrane region.

This sequence belongs to the actinoporin family. Sea anemone subfamily. In terms of assembly, octamer or nonamer in membranes. Monomer in the soluble state.

The protein resides in the secreted. It localises to the nematocyst. Its subcellular location is the target cell membrane. Its function is as follows. Pore-forming protein that forms cations-selective hydrophilic pores of around 1 nm and causes cytolysis. Pore formation is a multi-step process that involves specific recognition of membrane sphingomyelin (but neither cholesterol nor phosphatidylcholine) using aromatic rich region and adjacent phosphocholine (POC) binding site, firm binding to the membrane (mainly driven by hydrophobic interactions) accompanied by the transfer of the N-terminal region to the lipid-water interface and finally pore formation after oligomerization of monomers. The sequence is that of DELTA-alicitoxin-Pse1b from Phyllodiscus semoni (Night anemone).